A 963-amino-acid polypeptide reads, in one-letter code: Transcription factor cbf12 (963 aa).

Disordered stretches follow at residues 130–207 (NPSN…SQGL) and 248–289 (VNMN…PPQK). Polar residues-rich tracts occupy residues 143-207 (FENN…SQGL) and 249-289 (NMNS…PPQK).

Belongs to the Su(H) family.

It localises to the nucleus. Transcription factor which function may be to trigger the increase of adhesion at stationary phase, possibly by counteracting or replacing cbf11 at the respective promoters. May also play a cbf11-antagonistic role in the regulation of a number of other important processes such as extracellular material production, colony morphogenesis, ploidy maintenance, or meiosis. This Schizosaccharomyces pombe (strain 972 / ATCC 24843) (Fission yeast) protein is Transcription factor cbf12 (cbf12).